The sequence spans 182 residues: ATP synthase subunit delta (182 aa).

This sequence belongs to the ATPase delta chain family. F-type ATPases have 2 components, F(1) - the catalytic core - and F(0) - the membrane proton channel. F(1) has five subunits: alpha(3), beta(3), gamma(1), delta(1), epsilon(1). F(0) has three main subunits: a(1), b(2) and c(10-14). The alpha and beta chains form an alternating ring which encloses part of the gamma chain. F(1) is attached to F(0) by a central stalk formed by the gamma and epsilon chains, while a peripheral stalk is formed by the delta and b chains.

The protein resides in the cell inner membrane. Functionally, f(1)F(0) ATP synthase produces ATP from ADP in the presence of a proton or sodium gradient. F-type ATPases consist of two structural domains, F(1) containing the extramembraneous catalytic core and F(0) containing the membrane proton channel, linked together by a central stalk and a peripheral stalk. During catalysis, ATP synthesis in the catalytic domain of F(1) is coupled via a rotary mechanism of the central stalk subunits to proton translocation. Its function is as follows. This protein is part of the stalk that links CF(0) to CF(1). It either transmits conformational changes from CF(0) to CF(1) or is implicated in proton conduction. The sequence is that of ATP synthase subunit delta from Sulfurihydrogenibium sp. (strain YO3AOP1).